The following is a 184-amino-acid chain: Shikimate kinase (184 aa).

G20 to R25 is an ATP binding site. S24 provides a ligand contact to Mg(2+). Residues D42, R66, and G88 each contribute to the substrate site. R127 serves as a coordination point for ATP. R146 provides a ligand contact to substrate. R162 is an ATP binding site.

Belongs to the shikimate kinase family. As to quaternary structure, monomer. It depends on Mg(2+) as a cofactor.

The protein localises to the cytoplasm. The catalysed reaction is shikimate + ATP = 3-phosphoshikimate + ADP + H(+). Its pathway is metabolic intermediate biosynthesis; chorismate biosynthesis; chorismate from D-erythrose 4-phosphate and phosphoenolpyruvate: step 5/7. Its function is as follows. Catalyzes the specific phosphorylation of the 3-hydroxyl group of shikimic acid using ATP as a cosubstrate. This chain is Shikimate kinase, found in Thermus thermophilus (strain ATCC 27634 / DSM 579 / HB8).